The sequence spans 242 residues: MSKRRIAPLTFLRRLLLRILAALAVFWGGGIALFSVVPVPFSAVMAERQISAWLGGEFGYVAHSDWVSMADISPWMGLAVIAAEDQKFPEHWGFDVPAIEKALAHNERNESRIRGASTLSQQTAKNLFLWDGRSWVRKGLEAGLTLGIETVWSKKRILTVYLNIAEFGDGIFGVEAAAQRYFHKPASRLSLSEAALLAAVLPNPIRYKANAPSGYVRSRQAWIMRQMRQLGGESFMTRNQLN.

A helical transmembrane segment spans residues 19–39 (ILAALAVFWGGGIALFSVVPV).

Belongs to the glycosyltransferase 51 family.

The protein resides in the cell inner membrane. It catalyses the reaction [GlcNAc-(1-&gt;4)-Mur2Ac(oyl-L-Ala-gamma-D-Glu-L-Lys-D-Ala-D-Ala)](n)-di-trans,octa-cis-undecaprenyl diphosphate + beta-D-GlcNAc-(1-&gt;4)-Mur2Ac(oyl-L-Ala-gamma-D-Glu-L-Lys-D-Ala-D-Ala)-di-trans,octa-cis-undecaprenyl diphosphate = [GlcNAc-(1-&gt;4)-Mur2Ac(oyl-L-Ala-gamma-D-Glu-L-Lys-D-Ala-D-Ala)](n+1)-di-trans,octa-cis-undecaprenyl diphosphate + di-trans,octa-cis-undecaprenyl diphosphate + H(+). It participates in cell wall biogenesis; peptidoglycan biosynthesis. Peptidoglycan polymerase that catalyzes glycan chain elongation from lipid-linked precursors. The polypeptide is Biosynthetic peptidoglycan transglycosylase (Salmonella newport (strain SL254)).